We begin with the raw amino-acid sequence, 340 residues long: Uroporphyrinogen decarboxylase (340 aa).

Substrate is bound by residues 21–25 (RQAGR), aspartate 71, tyrosine 148, serine 203, and histidine 316.

It belongs to the uroporphyrinogen decarboxylase family. Homodimer.

It is found in the cytoplasm. The catalysed reaction is uroporphyrinogen III + 4 H(+) = coproporphyrinogen III + 4 CO2. It participates in porphyrin-containing compound metabolism; protoporphyrin-IX biosynthesis; coproporphyrinogen-III from 5-aminolevulinate: step 4/4. Functionally, catalyzes the decarboxylation of four acetate groups of uroporphyrinogen-III to yield coproporphyrinogen-III. This chain is Uroporphyrinogen decarboxylase, found in Campylobacter lari (strain RM2100 / D67 / ATCC BAA-1060).